The following is a 237-amino-acid chain: Neural retina-specific leucine zipper protein (237 aa).

Glycyl lysine isopeptide (Lys-Gly) (interchain with G-Cter in SUMO) cross-links involve residues Lys-20 and Lys-24. The segment at 26–64 is disordered; the sequence is EPSEGRSGVPTASLGSTPYSSVPPSPTFSEPGMVGGGEA. The tract at residues 30 to 93 is minimal transactivation domain (MTD); the sequence is GRSGVPTASL…SDEVLGLSPD (64 aa). Residues 159–185 are basic motif; sequence RLKQRRRTLKNRGYAQACRSKRLQQRR. A bZIP domain is found at 159–222; the sequence is RLKQRRRTLK…DLYKARCDRL (64 aa). Residues 187–208 form a leucine-zipper region; it reads LEAERARLAAQLDALRAEVARL.

This sequence belongs to the bZIP family. As to quaternary structure, interacts with FIZ1; this interaction represses transactivation. Interacts (via the leucine-zipper domain) with CRX. Disumoylated at Lys-20. Sumoylation modulates the transcriptional activity of NRL on RHO and NR2E3 promoters, and is required for normal rod differentiation. Post-translationally, phosphorylated. In terms of tissue distribution, expressed in the retina (at protein level).

The protein localises to the cytoplasm. The protein resides in the nucleus. In terms of biological role, acts as a transcriptional activator which regulates the expression of several rod-specific genes, including RHO and PDE6B. Also functions as a transcriptional coactivator, stimulating transcription mediated by the transcription factor CRX and NR2E3. Binds to the rhodopsin promoter in a sequence-specific manner. The protein is Neural retina-specific leucine zipper protein (Nrl) of Mus musculus (Mouse).